Consider the following 614-residue polypeptide: Methionine--tRNA ligase (614 aa).

The 'HIGH' region signature appears at 11–21; it reads PYTNGPRHIGH. Residues C143, C146, C156, and C159 each contribute to the Zn(2+) site. Residues 359–363 carry the 'KMSKS' region motif; it reads QFSTS. T362 lines the ATP pocket.

The protein belongs to the class-I aminoacyl-tRNA synthetase family. MetG type 1 subfamily. Monomer. The cofactor is Zn(2+).

It localises to the cytoplasm. It catalyses the reaction tRNA(Met) + L-methionine + ATP = L-methionyl-tRNA(Met) + AMP + diphosphate. In terms of biological role, is required not only for elongation of protein synthesis but also for the initiation of all mRNA translation through initiator tRNA(fMet) aminoacylation. This Beutenbergia cavernae (strain ATCC BAA-8 / DSM 12333 / CCUG 43141 / JCM 11478 / NBRC 16432 / NCIMB 13614 / HKI 0122) protein is Methionine--tRNA ligase.